Consider the following 889-residue polypeptide: Oxysterol-binding protein-related protein 8 (889 aa).

The residue at position 1 (Met1) is an N-acetylmethionine. Residues 1 to 129 (MEAALADGEP…SLKVQKKNYR (129 aa)) form a disordered region. 3 positions are modified to phosphoserine: Ser14, Ser65, and Ser68. Polar residues predominate over residues 62-71 (PSLSPASLHS). 3 stretches are compositionally biased toward basic and acidic residues: residues 73–88 (GFER…KDDS), 95–109 (SKSE…EKDS), and 116–129 (TKKE…KNYR). Residues 148–265 (VIVMADWLKI…WMDALELALK (118 aa)) form the PH domain. Phosphoserine is present on residues Ser314, Ser328, and Ser342. Residues 321 to 336 (FKDQDLYSDKSDKEND) are compositionally biased toward basic and acidic residues. The disordered stretch occupies residues 321 to 374 (FKDQDLYSDKSDKENDPEHDESDNEVLGKSEESDTDTSERQDDSYIDPEPVEPL). Basic and acidic residues predominate over residues 346–363 (VLGKSEESDTDTSERQDD). A 1,2-diacyl-sn-glycero-3-phospho-(1D-myo-inositol 4-phosphate)-binding positions include 420 to 425 (LSRVVL), 482 to 485 (KPYN), and 514 to 515 (HH). A 1,2-diacyl-sn-glycero-3-phospho-L-serine-binding positions include 420–425 (LSRVVL) and Asn485. Residue Ser540 participates in a 1,2-diacyl-sn-glycero-3-phospho-L-serine binding. The a 1,2-diacyl-sn-glycero-3-phospho-(1D-myo-inositol 4-phosphate) site is built by Lys706, Glu710, and Arg714. Residues 772–823 (HRTPMVSVPKMKHKPTRQQKKVVKGYSSPEPDIQDSSGSEAQSVKPSTRRKK) form a disordered region. Positions 781-794 (KMKHKPTRQQKKVV) are enriched in basic residues. Residues 805–817 (QDSSGSEAQSVKP) show a composition bias toward polar residues. Ser807, Ser808, Ser810, and Ser814 each carry phosphoserine. The helical transmembrane segment at 871 to 888 (YFVIFLLILLQVIINFIF) threads the bilayer.

The protein belongs to the OSBP family. As to quaternary structure, interacts with SPAG5. Interacts with NUP62. In terms of tissue distribution, widely expressed. Most abundant in liver, spleen, kidney, brain and adipose tissue.

The protein localises to the endoplasmic reticulum membrane. It localises to the nucleus membrane. Lipid transporter involved in lipid countertransport between the endoplasmic reticulum and the plasma membrane: specifically exchanges phosphatidylserine with phosphatidylinositol 4-phosphate (PI4P), delivering phosphatidylserine to the plasma membrane in exchange for PI4P, which is degraded by the SAC1/SACM1L phosphatase in the endoplasmic reticulum. Binds phosphatidylserine and PI4P in a mutually exclusive manner. Binds oxysterol, 25-hydroxycholesterol and cholesterol. This is Oxysterol-binding protein-related protein 8 from Mus musculus (Mouse).